We begin with the raw amino-acid sequence, 142 residues long: Large ribosomal subunit protein uL11 (142 aa).

Belongs to the universal ribosomal protein uL11 family. Part of the ribosomal stalk of the 50S ribosomal subunit. Interacts with L10 and the large rRNA to form the base of the stalk. L10 forms an elongated spine to which L12 dimers bind in a sequential fashion forming a multimeric L10(L12)X complex. In terms of processing, one or more lysine residues are methylated.

In terms of biological role, forms part of the ribosomal stalk which helps the ribosome interact with GTP-bound translation factors. The sequence is that of Large ribosomal subunit protein uL11 from Mycobacterium leprae (strain Br4923).